The following is a 279-amino-acid chain: MPTSNNYFHLHLVSDSTGETLITVARAVAAQYANVTPVEHVYPLVRSQKQLDRVLDEIEEAPGIVLFTLLEKDLVSRLEDKCKGINVPSLSIIGPVMQLFEAYLGAATTGRVGAQHVLNAEYFKRIDALNYTMIHDDGQHVEGLDDADVVLVGVSRTSKTPTSIYLANRGIRTANVPLVPGIPVPVQLETLTRPLVVSLHATPERLIQVRQNRLLSMGADSSSDTYTDRQSVAEEVAFARKLSAKHDWPLLDVTRRSIEETAAAIMKLYSDRQRNRPSE.

Position 153–160 (153–160 (GVSRTSKT)) interacts with ADP.

The protein belongs to the pyruvate, phosphate/water dikinase regulatory protein family. PDRP subfamily.

The catalysed reaction is N(tele)-phospho-L-histidyl/L-threonyl-[pyruvate, phosphate dikinase] + ADP = N(tele)-phospho-L-histidyl/O-phospho-L-threonyl-[pyruvate, phosphate dikinase] + AMP + H(+). The enzyme catalyses N(tele)-phospho-L-histidyl/O-phospho-L-threonyl-[pyruvate, phosphate dikinase] + phosphate + H(+) = N(tele)-phospho-L-histidyl/L-threonyl-[pyruvate, phosphate dikinase] + diphosphate. Bifunctional serine/threonine kinase and phosphorylase involved in the regulation of the pyruvate, phosphate dikinase (PPDK) by catalyzing its phosphorylation/dephosphorylation. This Bradyrhizobium diazoefficiens (strain JCM 10833 / BCRC 13528 / IAM 13628 / NBRC 14792 / USDA 110) protein is Putative pyruvate, phosphate dikinase regulatory protein.